A 142-amino-acid polypeptide reads, in one-letter code: Large ribosomal subunit protein uL13 (142 aa).

It belongs to the universal ribosomal protein uL13 family. Part of the 50S ribosomal subunit.

In terms of biological role, this protein is one of the early assembly proteins of the 50S ribosomal subunit, although it is not seen to bind rRNA by itself. It is important during the early stages of 50S assembly. This chain is Large ribosomal subunit protein uL13, found in Halorhodospira halophila (strain DSM 244 / SL1) (Ectothiorhodospira halophila (strain DSM 244 / SL1)).